A 251-amino-acid polypeptide reads, in one-letter code: 5'-nucleotidase SurE (251 aa).

A divalent metal cation contacts are provided by Asp-8, Asp-9, Ser-39, and Asn-91.

This sequence belongs to the SurE nucleotidase family. A divalent metal cation serves as cofactor.

It is found in the cytoplasm. The enzyme catalyses a ribonucleoside 5'-phosphate + H2O = a ribonucleoside + phosphate. Functionally, nucleotidase that shows phosphatase activity on nucleoside 5'-monophosphates. This is 5'-nucleotidase SurE from Methylococcus capsulatus (strain ATCC 33009 / NCIMB 11132 / Bath).